A 525-amino-acid polypeptide reads, in one-letter code: Light-independent protochlorophyllide reductase subunit B (525 aa).

A [4Fe-4S] cluster-binding site is contributed by D36. D292 serves as the catalytic Proton donor. Substrate is bound at residue 428–429 (GL). Positions 447–470 (PSASSENGSAPLSAGTATPAAAPE) are disordered. Residues 460-470 (AGTATPAAAPE) are compositionally biased toward low complexity.

Belongs to the ChlB/BchB/BchZ family. In terms of assembly, protochlorophyllide reductase is composed of three subunits; BchL, BchN and BchB. Forms a heterotetramer of two BchB and two BchN subunits. [4Fe-4S] cluster is required as a cofactor.

It catalyses the reaction chlorophyllide a + oxidized 2[4Fe-4S]-[ferredoxin] + 2 ADP + 2 phosphate = protochlorophyllide a + reduced 2[4Fe-4S]-[ferredoxin] + 2 ATP + 2 H2O. It participates in porphyrin-containing compound metabolism; bacteriochlorophyll biosynthesis (light-independent). Component of the dark-operative protochlorophyllide reductase (DPOR) that uses Mg-ATP and reduced ferredoxin to reduce ring D of protochlorophyllide (Pchlide) to form chlorophyllide a (Chlide). This reaction is light-independent. The NB-protein (BchN-BchB) is the catalytic component of the complex. In Chlorobium luteolum (strain DSM 273 / BCRC 81028 / 2530) (Pelodictyon luteolum), this protein is Light-independent protochlorophyllide reductase subunit B.